A 63-amino-acid chain; its full sequence is Large ribosomal subunit protein bL28 (63 aa).

It belongs to the bacterial ribosomal protein bL28 family.

This chain is Large ribosomal subunit protein bL28, found in Desulforudis audaxviator (strain MP104C).